Here is a 434-residue protein sequence, read N- to C-terminus: Eukaryotic translation initiation factor 3 subunit E (434 aa).

One can recognise a PCI domain in the interval 219-392 (FFNHPKGRDL…GHVVMGTQPL (174 aa)).

It belongs to the eIF-3 subunit E family. Component of the eukaryotic translation initiation factor 3 (eIF-3) complex. The eIF-3 complex interacts with pix. Interacts with mxt.

The protein localises to the cytoplasm. In terms of biological role, component of the eukaryotic translation initiation factor 3 (eIF-3) complex, which is involved in protein synthesis of a specialized repertoire of mRNAs and, together with other initiation factors, stimulates binding of mRNA and methionyl-tRNAi to the 40S ribosome. The eIF-3 complex specifically targets and initiates translation of a subset of mRNAs involved in cell proliferation. This is Eukaryotic translation initiation factor 3 subunit E (eIF3-S6) from Drosophila pseudoobscura pseudoobscura (Fruit fly).